The sequence spans 251 residues: 3-deoxy-manno-octulosonate cytidylyltransferase (251 aa).

This sequence belongs to the KdsB family.

It is found in the cytoplasm. The catalysed reaction is 3-deoxy-alpha-D-manno-oct-2-ulosonate + CTP = CMP-3-deoxy-beta-D-manno-octulosonate + diphosphate. The protein operates within nucleotide-sugar biosynthesis; CMP-3-deoxy-D-manno-octulosonate biosynthesis; CMP-3-deoxy-D-manno-octulosonate from 3-deoxy-D-manno-octulosonate and CTP: step 1/1. Its pathway is bacterial outer membrane biogenesis; lipopolysaccharide biosynthesis. Functionally, activates KDO (a required 8-carbon sugar) for incorporation into bacterial lipopolysaccharide in Gram-negative bacteria. The sequence is that of 3-deoxy-manno-octulosonate cytidylyltransferase from Chlorobium luteolum (strain DSM 273 / BCRC 81028 / 2530) (Pelodictyon luteolum).